The sequence spans 196 residues: Vacuolar iron transporter homolog 2 (196 aa).

Over 1–31 the chain is Cytoplasmic; that stretch reads MDQSGSNTNMDIEKESTTFDYSKRSQWLRAA. A helical transmembrane segment spans residues 32 to 52; sequence VLGANDGLVSTASLMMGVGAV. Residues 53-59 lie on the Vacuolar side of the membrane; that stretch reads KHDVKAM. Residues 60–80 form a helical membrane-spanning segment; that stretch reads ILSGFAGMVAGACSMAIGEFV. Residues 81–112 lie on the Cytoplasmic side of the membrane; it reads SVYSQYDIEVAQMERDSVEIEKEKLPSPMQAA. The helical transmembrane segment at 113 to 133 threads the bilayer; it reads AASALAFSAGAIVPLLAAAFV. Residues 134 to 139 lie on the Vacuolar side of the membrane; the sequence is KEYKMR. A helical transmembrane segment spans residues 140–160; sequence IISVVVAVTVALMVFGWLGAA. The Cytoplasmic portion of the chain corresponds to 161 to 172; it reads LGKAPAVRSSAR. The helical transmembrane segment at 173 to 193 threads the bilayer; it reads VLFGGWLAMAVTFGLTKLIGL. Residues 194–196 lie on the Vacuolar side of the membrane; the sequence is YGL.

Belongs to the CCC1 family. As to expression, expressed in roots, leaves and inflorescences.

The protein localises to the vacuole membrane. The enzyme catalyses Fe(2+)(in) = Fe(2+)(out). Its function is as follows. Vacuolar iron transporter involved in the transfer of iron ions from the cytosol to the vacuole for intracellular iron storage. Involved in regulation of cellular iron homeostasis. Vacuolar iron storage is required for seed embryo and seedling development. The polypeptide is Vacuolar iron transporter homolog 2 (Arabidopsis thaliana (Mouse-ear cress)).